Consider the following 322-residue polypeptide: Myeloid-associated differentiation marker (322 aa).

Residues 1 to 25 form a disordered region; that stretch reads MPVTVTRTTITTTTTSSSGQGSPTI. A Phosphoserine modification is found at Ser22. MARVEL domains are found at residues 31-163 and 168-319; these read ALTQ…ARPG and YMAT…HLVF. The next 8 membrane-spanning stretches (helical) occupy residues 41 to 61, 70 to 90, 101 to 121, 137 to 157, 171 to 191, 203 to 223, 239 to 259, and 294 to 314; these read LLQLVSTCVAFSLVASVGAWT, FTWCFCFSVTLIILIVELCGL, FPITFACYAALFCLSASIIYP, AIAATFFSCIACVAYATEVAW, TVPGLLKVLETFVACIIFAFI, LEWCVAVYAICFILAAIAILL, FLSGLALLSVLLYATALVLWP, and LAVAILTAINLLAYVADLVHS.

Belongs to the MAL family.

The protein localises to the membrane. This is Myeloid-associated differentiation marker (MYADM) from Pongo abelii (Sumatran orangutan).